The sequence spans 500 residues: Probable cytosol aminopeptidase (500 aa).

Residues Lys-265 and Asp-270 each coordinate Mn(2+). Residue Lys-277 is part of the active site. Residues Asp-288, Asp-347, and Glu-349 each contribute to the Mn(2+) site. Residue Arg-351 is part of the active site.

The protein belongs to the peptidase M17 family. It depends on Mn(2+) as a cofactor.

It is found in the cytoplasm. It catalyses the reaction Release of an N-terminal amino acid, Xaa-|-Yaa-, in which Xaa is preferably Leu, but may be other amino acids including Pro although not Arg or Lys, and Yaa may be Pro. Amino acid amides and methyl esters are also readily hydrolyzed, but rates on arylamides are exceedingly low.. The enzyme catalyses Release of an N-terminal amino acid, preferentially leucine, but not glutamic or aspartic acids.. Functionally, presumably involved in the processing and regular turnover of intracellular proteins. Catalyzes the removal of unsubstituted N-terminal amino acids from various peptides. This chain is Probable cytosol aminopeptidase, found in Rickettsia felis (strain ATCC VR-1525 / URRWXCal2) (Rickettsia azadi).